The primary structure comprises 82 residues: Protein transport protein Sec61 subunit beta (82 aa).

M1 bears the N-acetylmethionine mark. The segment at 1–34 is disordered; the sequence is MVGSGAPQRGSAAATASMRRRKPTSGAGGGGASG. The Cytoplasmic segment spans residues 1 to 55; the sequence is MVGSGAPQRGSAAATASMRRRKPTSGAGGGGASGGAAGSMLQFYTDDAPGLKISP. The helical transmembrane segment at 56 to 76 threads the bilayer; it reads NVVLIMSIGFIAFVAVLHVMG.

This sequence belongs to the SEC61-beta family. In terms of assembly, heterotrimeric complex composed of SEC61-alpha, SEC61-beta and SEC61-gamma.

It localises to the endoplasmic reticulum membrane. Functionally, necessary for protein translocation in the endoplasmic reticulum. The chain is Protein transport protein Sec61 subunit beta from Arabidopsis thaliana (Mouse-ear cress).